The chain runs to 120 residues: Myohemerythrin (120 aa).

The Fe cation site is built by H26, H56, E60, H75, H79, H108, and D113.

This sequence belongs to the hemerythrin family.

Functionally, myohemerythrin is an oxygen-binding protein found in the retractor muscles of certain worms. The oxygen-binding site contains two iron atoms. The chain is Myohemerythrin from Riftia pachyptila (Vent tube worm).